The following is a 606-amino-acid chain: NADH-ubiquinone oxidoreductase chain 5 (606 aa).

Transmembrane regions (helical) follow at residues 1–21 (MNPF…PIMM), 43–63 (AFTL…EMII), 87–107 (VMFI…SMWY), 112–132 (PFIN…MILV), 137–157 (LFQL…LIGW), 171–191 (AILY…WFLT), 213–233 (LIGL…HPWL), 241–261 (TPVS…FLLI), 273–293 (VQTM…LCAI), 301–321 (IVAF…GINQ), 324–344 (LAFL…MCSG), 366–386 (MPFT…MPYL), 407–429 (WALL…IIFF), 457–477 (LLIG…PMTV), 482–502 (MPLY…MLAL), and 582–602 (GLIK…MTLF).

The protein belongs to the complex I subunit 5 family. In terms of assembly, core subunit of respiratory chain NADH dehydrogenase (Complex I) which is composed of 45 different subunits.

The protein localises to the mitochondrion inner membrane. It carries out the reaction a ubiquinone + NADH + 5 H(+)(in) = a ubiquinol + NAD(+) + 4 H(+)(out). Core subunit of the mitochondrial membrane respiratory chain NADH dehydrogenase (Complex I) which catalyzes electron transfer from NADH through the respiratory chain, using ubiquinone as an electron acceptor. Essential for the catalytic activity and assembly of complex I. In Sus scrofa (Pig), this protein is NADH-ubiquinone oxidoreductase chain 5 (MT-ND5).